The sequence spans 534 residues: BEN domain-containing protein 4 (534 aa).

Disordered regions lie at residues 1 to 24, 48 to 128, and 287 to 322; these read MEEE…RSPY, ELPH…AASS, and VHTL…EEGY. The span at 53 to 63 shows a compositional bias: pro residues; sequence RAPPPPPPPFA. A compositionally biased stretch (polar residues) spans 69-83; sequence SISSSEPPPQQFQAQ. A compositionally biased stretch (low complexity) spans 91 to 109; that stretch reads GRAAAAASSSSPSCTPATS. Over residues 295 to 310 the composition is skewed to polar residues; sequence SPATSESHGHPSSSTL. Positions 311–321 are enriched in acidic residues; it reads PEEEEEEDEEG. Positions 324–351 form a coiled coil; sequence PRCQELEQEVISLQQENEELRRKLESIP. One can recognise a BEN domain in the interval 390–498; the sequence is NYPVYITSKQ…DAVGHARQGR (109 aa).

This is BEN domain-containing protein 4 (BEND4) from Homo sapiens (Human).